The sequence spans 1342 residues: MVSRSSEGAEGPPPSAPKPPNTPAKSRLSRLGSSPSKREDKSRDDRMIKSSAKDVAELKDYQLGDCLGKGAFGSVYRALNWNTGETVAVKQIKLADLPKSELRLEIDLLKNLDHPNIVKYQGFVKSAETLNIILEYCENGSLHSIAKNFGRFPENLVGLYMSQVLHGLLYLHEQGVIHRDIKGANILTTKEGLVKLADFGVASRTTGLSESSVVGTPYWMAPEVIELSGATTASDIWSLGCTVIELLEGKPPYYNMQPMPALFRIVNDDHPPLPQGASPAVKDFLMQCFQKDPNLRVSARKLLKHPWIVNARRSDSVVPKSSTEYEEAVRSVQEWNEALRSPSAGTLRRPVKHDQSPIPVPPTRHTPTKDTLPSPVSRNVTDRFRSPVPTEEEEDNWDDDFATAISPSALQLPHLRPHDNFGGMLSSEKLKAFASLDGTMIKSDDSFGDSDSSFGSSRRSDEPDPLETIRPYPLKQPTAESTQLQELPRSQINKTSMASMHHVPILTQNPTPPTKQPRPASYYKENSIEDYSDLIQANEDVLDSKLGAFQEADENVDPFESSPSKEAIRNRASAEDVMGQQPQLRKQISVKRHRSAVEIQRFAENERDEDFSDLLGTDEVMIDQPESDGSSDQSTLMLNSKLSNNSWLGDQDDEDDPFAQLEEGLDEMDLEANIARDKHARLRNQVEGLVSSLKTSQDEDVLAEISEQLLTVFCDFPETKNIIISAHGMLPILEILDMCRRRDITSCLLKIVNAIIYNDYEIQENLCFVGGIPIINEFASKKYPREIRLEAAAFVQQMYQTSTLTLQMFVSAGGLNVLVEFLEDDYEDERDLVLIGVNGIWSVFELQGSTPKNDFCRILSRNSVLDPLSLVLSRVLDEDGELAEIVEGRIANIFFIFSQAENHVKEMVAERTVLHRVLKELRRMTPAHQITMLKFIKNLSMLSTTLDSLQNSNAIDVLTDLLRATMKRPHFREVSNQILNTIYNMCRLNKSRQEDAALNGIVPLLQKIVKTERPLKEFALPILCDMAHSGKVGRRELWRNKGLAFYISLLSDPYWQVTALDAIFTWLQEETAKVEEHLLDHRPDRPSFTDSIVRCLTISKANAFENLLEPLQKLLRLSPPIASTLARPDLFTRIGQKLHHSKAAVRLNLLRIISSICDSSEEQGGLLAKYGLLDAIRELEHDPAILVRDMAGKLIQSNEKSEAYGMGKRKPMVRRRSTSATPPNLLANQSAPSTPQMNRTSQSKAYYEGKEGSRHPRNALSGSALALRPGSRDGSTPSLTAGLNGSTGASRTRLPRGVSNRMSHVDLLSEEDSARPSSSLSRRQSVLHRRRRQTQADADWTP.

Positions 1-10 (MVSRSSEGAE) are enriched in low complexity. The disordered stretch occupies residues 1 to 47 (MVSRSSEGAEGPPPSAPKPPNTPAKSRLSRLGSSPSKREDKSRDDRM). The segment covering 11 to 22 (GPPPSAPKPPNT) has biased composition (pro residues). Residues 36 to 47 (SKREDKSRDDRM) show a composition bias toward basic and acidic residues. The Protein kinase domain occupies 61-308 (YQLGDCLGKG…ARKLLKHPWI (248 aa)). ATP-binding positions include 67–75 (LGKGAFGSV) and Lys-90. Residue Asp-180 is the Proton acceptor of the active site. 3 disordered regions span residues 336–396 (NEAL…EEDN), 441–486 (IKSD…QLQE), and 552–591 (ADEN…ISVK). A compositionally biased stretch (polar residues) spans 369-379 (KDTLPSPVSRN). The stretch at 658–695 (FAQLEEGLDEMDLEANIARDKHARLRNQVEGLVSSLKT) forms a coiled coil. The disordered stretch occupies residues 1201 to 1342 (SEAYGMGKRK…QTQADADWTP (142 aa)). A compositionally biased stretch (basic residues) spans 1207-1217 (GKRKPMVRRRS). Polar residues-rich tracts occupy residues 1218–1244 (TSAT…SQSK) and 1273–1290 (DGST…TGAS). Residues 1315–1324 (RPSSSLSRRQ) show a composition bias toward low complexity.

The protein belongs to the protein kinase superfamily. Ser/Thr protein kinase family. CDC7 subfamily. Requires Mg(2+) as cofactor.

The enzyme catalyses L-seryl-[protein] + ATP = O-phospho-L-seryl-[protein] + ADP + H(+). It carries out the reaction L-threonyl-[protein] + ATP = O-phospho-L-threonyl-[protein] + ADP + H(+). Required for early events during cytokinesis including localization of cytoskeletal components to the cytokinetic ring. This chain is Cytokinesis protein sepH, found in Aspergillus terreus (strain NIH 2624 / FGSC A1156).